A 229-amino-acid chain; its full sequence is Potassium/proton antiporter CemA (229 aa).

Helical transmembrane passes span 7-27 (FSPI…YLSF), 106-126 (MILR…FYIW), and 189-209 (IISG…KYWI).

Belongs to the CemA family.

It is found in the plastid membrane. The enzyme catalyses K(+)(in) + H(+)(out) = K(+)(out) + H(+)(in). Its function is as follows. May be involved in proton extrusion. The polypeptide is Potassium/proton antiporter CemA (Cuscuta reflexa (Southern Asian dodder)).